The chain runs to 98 residues: NADH-ubiquinone oxidoreductase chain 4L (98 aa).

The next 3 membrane-spanning stretches (helical) occupy residues 1–21 (MSLV…GLLM), 29–49 (ALLC…LTIL), and 61–81 (IILL…LIMI).

The protein belongs to the complex I subunit 4L family. Core subunit of respiratory chain NADH dehydrogenase (Complex I) which is composed of 45 different subunits.

The protein resides in the mitochondrion inner membrane. The enzyme catalyses a ubiquinone + NADH + 5 H(+)(in) = a ubiquinol + NAD(+) + 4 H(+)(out). Core subunit of the mitochondrial membrane respiratory chain NADH dehydrogenase (Complex I) which catalyzes electron transfer from NADH through the respiratory chain, using ubiquinone as an electron acceptor. Part of the enzyme membrane arm which is embedded in the lipid bilayer and involved in proton translocation. The polypeptide is NADH-ubiquinone oxidoreductase chain 4L (MT-ND4L) (Monodon monoceros (Narwhal)).